We begin with the raw amino-acid sequence, 30 residues long: Cysteine-rich venom protein mossambin (30 aa).

The tract at residues 1–30 (NVDFNSESTRRKKKQNEIVDLHNSLRRTVN) is disordered.

It belongs to the CRISP family. Contains 8 disulfide bonds. Expressed by the venom gland.

It is found in the secreted. Inhibits calcium-activated potassium channels (KCa), voltage-gated potassium channel (Kv), and the calcium release channel/ryanodine receptor (RyR). The sequence is that of Cysteine-rich venom protein mossambin from Naja mossambica (Mozambique spitting cobra).